The chain runs to 293 residues: Magnetosome protein MamB (293 aa).

Over 1–12 (MTTAACRKCRDE) the chain is Cytoplasmic. The tract at residues 1–214 (MTTAACRKCR…GLMDTSVEND (214 aa)) is transmembrane domain (TMD). Residues 13–33 (VIWWAFFINIGQTTYKGVLGV) traverse the membrane as a helical segment. Residues 34-78 (LSGSAALVADAMHSGADVVATLVTMFSVKVSDKKADEKYPFGYGN) lie on the Lumenal side of the membrane. Residues 79 to 99 (IQFIASSIVGLILFFGALYLM) form a helical membrane-spanning segment. Over 100–105 (YESTMQ) the chain is Cytoplasmic. A helical membrane pass occupies residues 106-126 (IIAGNTSSPSPFAVLGAIVSI). Residues 127–158 (ATNELMFRYQSCVGRQNNSPAIIANAWDNRSD) lie on the Lumenal side of the membrane. A helical transmembrane segment spans residues 159-179 (ALSSVAVLIGIVAAVVGFPIA). Topologically, residues 180–293 (DRLAAIGVGI…VGVTPVRIAA (114 aa)) are cytoplasmic. The interval 215-293 (VLVDAYNIAK…VGVTPVRIAA (79 aa)) is C-terminal domain (CTD). Zn(2+) contacts are provided by H245, D247, and H283.

Belongs to the cation diffusion facilitator (CDF) transporter (TC 2.A.4) family. The isolated C-terminal domain (approximately 213-293) forms homodimers. Forms heterodimers with MamM.

The protein localises to the magnetosome membrane. In terms of biological role, plays a dual, essential role in magnetosome formation; required for magnetosome vesicle formation as well as biomineralization. Probably binds and transports iron. Requires heterodimerization with MamM for stability. This is Magnetosome protein MamB (mamB) from Magnetospira sp. (strain QH-2) (Marine magnetic spirillum (strain QH-2)).